Here is a 1798-residue protein sequence, read N- to C-terminus: Non-reducing polyketide synthase nscA (1798 aa).

Residues 25-256 (RRLDQHSKDR…PLPVYDGLCH (232 aa)) form an N-terminal acylcarrier protein transacylase domain (SAT) region. Residues 392 to 825 (SSKLAIVGMA…GGNTTLLLED (434 aa)) form the Ketosynthase family 3 (KS3) domain. The tract at residues 436-455 (NTHYDPTGKTENTTQTPYGN) is disordered. Positions 444–453 (KTENTTQTPY) are enriched in polar residues. Catalysis depends on for beta-ketoacyl synthase activity residues Cys565, His700, and His743. Positions 931-1230 (FTGQGAYYHG…PSASAMSSCR (300 aa)) are malonyl-CoA:ACP transacylase (MAT) domain. Positions 1322 to 1458 (HQITAETVEA…AMIRFEDPVA (137 aa)) are N-terminal hotdog fold. Positions 1322 to 1632 (HQITAETVEA…FRRVPRLLMD (311 aa)) constitute a PKS/mFAS DH domain. His1354 (proton acceptor; for dehydratase activity) is an active-site residue. Residues 1390-1628 (HMNLTDVEVL…GMIRFRRVPR (239 aa)) form a product template (PT) domain region. The interval 1486–1632 (ASRLSKPLAY…FRRVPRLLMD (147 aa)) is C-terminal hotdog fold. The Proton donor; for dehydratase activity role is filled by Asp1543. A disordered region spans residues 1685-1719 (MASKAPEPAPLLATSSESSTPKESPIVTPAESERA). The segment covering 1698-1709 (TSSESSTPKESP) has biased composition (low complexity). The 78-residue stretch at 1721–1798 (PVDNNMISQC…EMTAWIEEYC (78 aa)) folds into the Carrier domain. Ser1758 is subject to O-(pantetheine 4'-phosphoryl)serine.

It depends on pantetheine 4'-phosphate as a cofactor.

It functions in the pathway secondary metabolite biosynthesis. In terms of biological role, non-reducing polyketide synthase; part of the gene cluster that mediates the biosynthesis of neosartoricin B, a prenylated anthracenone that probably exhibits T-cell antiproliferative activity, suggestive of a physiological role as an immunosuppressive agent. The non-reducing polyketide synthase nscA probably synthesizes and cyclizes the decaketide backbone. The hydrolase nscB then mediates the product release through hydrolysis followed by spontaneous decarboxylation. The prenyltransferase nscD catalyzes the addition of the dimethylallyl group to the aromatic C5. The FAD-dependent monooxygenase nscC is then responsible for the stereospecific hydroxylation at C2. Neosartoricin B can be converted into two additional compounds neosartoricins C and D. Neosartoricin C is a spirocyclic compound that is cyclized through the attack of C3 hydroxyl on C14, followed by dehydration. On the other hand, neosartoricin D is a further cyclized compound in which attack of C2 on C14 in neosartoricin C results in the formation of the acetal-containing dioxabicyclo-octanone ring. Both of these compounds are novel and possibly represent related metabolites of the gene cluster. The protein is Non-reducing polyketide synthase nscA of Arthroderma benhamiae (strain ATCC MYA-4681 / CBS 112371) (Trichophyton mentagrophytes).